The primary structure comprises 447 residues: Argininosuccinate synthase (447 aa).

ATP contacts are provided by residues alanine 17–serine 25 and alanine 43. Tyrosine 99 contributes to the L-citrulline binding site. ATP is bound by residues glycine 129 and threonine 131. L-aspartate-binding residues include threonine 131, asparagine 135, and aspartate 136. Asparagine 135 is a binding site for L-citrulline. Aspartate 136 is an ATP binding site. Arginine 139 and serine 192 together coordinate L-citrulline. Position 194 (aspartate 194) interacts with ATP. 3 residues coordinate L-citrulline: threonine 201, glutamate 203, and glutamate 280.

Belongs to the argininosuccinate synthase family. Type 2 subfamily. In terms of assembly, homotetramer.

Its subcellular location is the cytoplasm. The enzyme catalyses L-citrulline + L-aspartate + ATP = 2-(N(omega)-L-arginino)succinate + AMP + diphosphate + H(+). Its pathway is amino-acid biosynthesis; L-arginine biosynthesis; L-arginine from L-ornithine and carbamoyl phosphate: step 2/3. The sequence is that of Argininosuccinate synthase from Salmonella newport (strain SL254).